A 734-amino-acid polypeptide reads, in one-letter code: Casein kinase II subunit alpha'-interacting protein (734 aa).

The tract at residues 608–654 (SLLPSTSSSTSSSSTTSSSSSVASASSDSSSSSSSSSSFSISSSSSP) is disordered. The span at 612 to 654 (STSSSTSSSSTTSSSSSVASASSDSSSSSSSSSSFSISSSSSP) shows a compositional bias: low complexity.

Interacts (via C-terminus) with CSNK2A2. In terms of processing, phosphorylated by CK2 (casein kinase II), specifically by complexes containing catalytic subunit CSNK2A2.

It localises to the nucleus. Its function is as follows. May play a role in chromatin regulation of male germ cells. The protein is Casein kinase II subunit alpha'-interacting protein of Homo sapiens (Human).